A 355-amino-acid chain; its full sequence is Peptide chain release factor 1 (355 aa).

At Gln233 the chain carries N5-methylglutamine.

It belongs to the prokaryotic/mitochondrial release factor family. Methylated by PrmC. Methylation increases the termination efficiency of RF1.

Its subcellular location is the cytoplasm. Its function is as follows. Peptide chain release factor 1 directs the termination of translation in response to the peptide chain termination codons UAG and UAA. The sequence is that of Peptide chain release factor 1 from Rickettsia typhi (strain ATCC VR-144 / Wilmington).